The chain runs to 250 residues: 3-deoxy-manno-octulosonate cytidylyltransferase (250 aa).

The protein belongs to the KdsB family.

The protein localises to the cytoplasm. The enzyme catalyses 3-deoxy-alpha-D-manno-oct-2-ulosonate + CTP = CMP-3-deoxy-beta-D-manno-octulosonate + diphosphate. The protein operates within nucleotide-sugar biosynthesis; CMP-3-deoxy-D-manno-octulosonate biosynthesis; CMP-3-deoxy-D-manno-octulosonate from 3-deoxy-D-manno-octulosonate and CTP: step 1/1. It functions in the pathway bacterial outer membrane biogenesis; lipopolysaccharide biosynthesis. Its function is as follows. Activates KDO (a required 8-carbon sugar) for incorporation into bacterial lipopolysaccharide in Gram-negative bacteria. In Actinobacillus pleuropneumoniae serotype 7 (strain AP76), this protein is 3-deoxy-manno-octulosonate cytidylyltransferase.